The chain runs to 535 residues: MAKKKERAVNVSGKPRHSLDVNRANDKKGAGGGAGGGGGGRSAATVRRLKMYKMRPLRDRGGKILKHDLQSKELPNTRIEPDRRWFGNTRVVNQKELEFFREELQSRLSNNYNVILKERKLPLSLLQDHQKQARAHLLDTEPFEHAFGPKGKRKRPKLMALDYESLLKKADDSQGAFEDKHATAKLLKEEEEDGLRDLVRHTMFEKGQSKRIWGELYKVIDSSDVVVQVLDARDPMGTRCYHLEKHLKENAKHKHLVFLLNKCDLVPAWATKGWLRTLSKDYPTLAFHASINSSFGKGSLLSVLRQFARLKSDKQAISVGFVGYPNVGKSSVINTLRSKSVCKVAPIPGETKVWQYITLTKRIFLIDCPGVVYQNNDSETDIVLKGVVRVTNLADASEHIGEVLRRVKKEHLKRAYKIEDWVDDNDFLVQLSKTTGKLLRGGEPDLTTTAKMVLHDWQRGKIPFFVPPPQQGEDSPSETAEPVEKSDEEGVSSDRTAAAMKAIAGIISSQQQMNVPCQKEFGVTNEDSEVAEQSE.

Positions 1–42 (MAKKKERAVNVSGKPRHSLDVNRANDKKGAGGGAGGGGGGRS) are disordered. Residues 17–29 (HSLDVNRANDKKG) are compositionally biased toward basic and acidic residues. A compositionally biased stretch (gly residues) spans 30-41 (AGGGAGGGGGGR). The CP-type G domain occupies 213-374 (WGELYKVIDS…LIDCPGVVYQ (162 aa)). A G4 region spans residues 261 to 264 (NKCD). Positions 290–292 (SIN) are G5. The G1 stretch occupies residues 323-330 (GYPNVGKS). The interval 349–353 (GETKV) is G2. The G3 stretch occupies residues 367–370 (DCPG). Residues 464–494 (FFVPPPQQGEDSPSETAEPVEKSDEEGVSSD) form a disordered region.

This sequence belongs to the TRAFAC class YlqF/YawG GTPase family. RsgA subfamily. In terms of assembly, interacts (via N-terminus) with the 60S ribosomal proteins RPL10A. This interaction is enhanced by the addition of GTP. As to expression, expressed in roots, shoot apical meristem, leaves, leaf sheaths and flowers.

It localises to the nucleus. The protein resides in the nucleolus. With respect to regulation, the GTPase activity is stimulated in the presence of ribosomes, particularly of the 60S subunit. In terms of biological role, GTPase involved in pre-60S ribosomal subunit maturation. This chain is Nuclear/nucleolar GTPase 2, found in Oryza sativa subsp. japonica (Rice).